The primary structure comprises 119 residues: Protein yippee-like 3 (119 aa).

The region spanning 19-116 is the Yippee domain; it reads RRYSCVHCRA…IELSHMIKDN (98 aa). Zn(2+)-binding residues include C23, C26, C79, and C82.

It belongs to the yippee family.

Its subcellular location is the nucleus. The protein resides in the nucleolus. May be involved in proliferation and apoptosis in myeloid precursor cells. The chain is Protein yippee-like 3 (ypel3) from Oryzias latipes (Japanese rice fish).